Reading from the N-terminus, the 389-residue chain is Na(+)/H(+) antiporter NhaA 1 (389 aa).

The next 11 membrane-spanning stretches (helical) occupy residues 12 to 32 (VLNE…ALLV), 62 to 82 (FLLW…GLEL), 97 to 117 (IVLP…LFAL), 128 to 148 (GWAI…MMCG), 157 to 177 (IFLL…IAIF), 184 to 204 (IAAF…NLLG), 220 to 240 (ISVL…AFFI), 260 to 280 (FWIA…VNLS), 282 to 302 (IDIG…LFVG), 331 to 351 (LYGV…IDGL), and 365 to 385 (LAIL…LKFF).

This sequence belongs to the NhaA Na(+)/H(+) (TC 2.A.33) antiporter family.

It is found in the cell inner membrane. The catalysed reaction is Na(+)(in) + 2 H(+)(out) = Na(+)(out) + 2 H(+)(in). Na(+)/H(+) antiporter that extrudes sodium in exchange for external protons. This chain is Na(+)/H(+) antiporter NhaA 1, found in Campylobacter jejuni subsp. jejuni serotype O:2 (strain ATCC 700819 / NCTC 11168).